Consider the following 61-residue polypeptide: Small ribosomal subunit protein uS14 (61 aa).

Cys24, Cys27, Cys40, and Cys43 together coordinate Zn(2+).

It belongs to the universal ribosomal protein uS14 family. Zinc-binding uS14 subfamily. As to quaternary structure, part of the 30S ribosomal subunit. Contacts proteins S3 and S10. It depends on Zn(2+) as a cofactor.

Functionally, binds 16S rRNA, required for the assembly of 30S particles and may also be responsible for determining the conformation of the 16S rRNA at the A site. In Treponema denticola (strain ATCC 35405 / DSM 14222 / CIP 103919 / JCM 8153 / KCTC 15104), this protein is Small ribosomal subunit protein uS14.